Consider the following 463-residue polypeptide: Putative pentatricopeptide repeat-containing protein At4g17915 (463 aa).

PPR repeat units lie at residues 12–46 (STRL…GVDP), 47–81 (DVVT…GIRP), 82–116 (DVAT…GIYP), 117–152 (DLWS…GLNP), 153–186 (GPDT…RFKP), 187–221 (ELMT…GYTP), 222–256 (NAVT…GYTY), 257–291 (DGYA…GRRH), 292–326 (DIVS…GMKA), 327–361 (DEYT…GIGL), 362–392 (NLVT…MEVK), and 393–427 (DEYT…GIKI).

This sequence belongs to the PPR family. P subfamily.

The chain is Putative pentatricopeptide repeat-containing protein At4g17915 from Arabidopsis thaliana (Mouse-ear cress).